The following is a 122-amino-acid chain: Large ribosomal subunit protein uL14c (122 aa).

It belongs to the universal ribosomal protein uL14 family. In terms of assembly, part of the 50S ribosomal subunit.

Its subcellular location is the plastid. The protein resides in the chloroplast. Functionally, binds to 23S rRNA. This chain is Large ribosomal subunit protein uL14c, found in Panax ginseng (Korean ginseng).